Reading from the N-terminus, the 412-residue chain is Pentatricopeptide repeat-containing protein At3g60980, mitochondrial (412 aa).

The transit peptide at 1 to 18 directs the protein to the mitochondrion; that stretch reads MSLIGRLNLGRRFCTAVP. PPR repeat units follow at residues 69 to 104, 105 to 139, 143 to 178, 179 to 213, 230 to 264, 266 to 296, 305 to 339, 344 to 371, and 373 to 407; these read TTTI…NLRP, NSHC…GQVH, SDDS…TTYP, DHVA…FLIA, VAFL…NRLL, CAET…LLDK, DSDT…NDYL, IITR…DFGY, and DVNT…TLKE.

Belongs to the PPR family. P subfamily.

It localises to the mitochondrion. The chain is Pentatricopeptide repeat-containing protein At3g60980, mitochondrial from Arabidopsis thaliana (Mouse-ear cress).